Here is an 83-residue protein sequence, read N- to C-terminus: Large ribosomal subunit protein bL31B (83 aa).

Belongs to the bacterial ribosomal protein bL31 family. Type B subfamily. Part of the 50S ribosomal subunit.

Its function is as follows. Binds the 23S rRNA. The sequence is that of Large ribosomal subunit protein bL31B from Hydrogenovibrio crunogenus (strain DSM 25203 / XCL-2) (Thiomicrospira crunogena).